The following is a 568-amino-acid chain: Potassium-transporting ATPase potassium-binding subunit (568 aa).

10 helical membrane-spanning segments follow: residues 7 to 27, 65 to 85, 135 to 155, 177 to 197, 254 to 274, 286 to 306, 383 to 403, 422 to 442, 489 to 509, and 530 to 550; these read AEIA…GLFL, SYAL…YAIL, AGLT…AAAV, VSLY…VALG, LTNL…VVAF, ALIT…YWTE, GLYG…LMVG, MLAV…AAVL, LGIA…AIAG, and LFIG…FFPA.

It belongs to the KdpA family. The system is composed of three essential subunits: KdpA, KdpB and KdpC.

The protein resides in the cell inner membrane. Functionally, part of the high-affinity ATP-driven potassium transport (or Kdp) system, which catalyzes the hydrolysis of ATP coupled with the electrogenic transport of potassium into the cytoplasm. This subunit binds the periplasmic potassium ions and delivers the ions to the membrane domain of KdpB through an intramembrane tunnel. This Beijerinckia indica subsp. indica (strain ATCC 9039 / DSM 1715 / NCIMB 8712) protein is Potassium-transporting ATPase potassium-binding subunit.